A 243-amino-acid chain; its full sequence is 7-cyano-7-deazaguanine synthase (243 aa).

An ATP-binding site is contributed by 18–28 (FSGGQDSATCL). The Zn(2+) site is built by Cys-206, Cys-221, Cys-224, and Cys-227.

This sequence belongs to the QueC family. The cofactor is Zn(2+).

The enzyme catalyses 7-carboxy-7-deazaguanine + NH4(+) + ATP = 7-cyano-7-deazaguanine + ADP + phosphate + H2O + H(+). It participates in purine metabolism; 7-cyano-7-deazaguanine biosynthesis. Its function is as follows. Catalyzes the ATP-dependent conversion of 7-carboxy-7-deazaguanine (CDG) to 7-cyano-7-deazaguanine (preQ(0)). In Maricaulis maris (strain MCS10) (Caulobacter maris), this protein is 7-cyano-7-deazaguanine synthase.